The primary structure comprises 451 residues: Serine--tRNA ligase, cytoplasmic (451 aa).

236 to 238 serves as a coordination point for L-serine; it reads TSE. ATP contacts are provided by residues 267–269 and Val283; that span reads RKE. Glu290 is an L-serine binding site. 354–357 contributes to the ATP binding site; it reads ELVS. An L-serine-binding site is contributed by Thr392.

This sequence belongs to the class-II aminoacyl-tRNA synthetase family. Type-1 seryl-tRNA synthetase subfamily. Homodimer. The tRNA molecule binds across the dimer.

It localises to the cytoplasm. The catalysed reaction is tRNA(Ser) + L-serine + ATP = L-seryl-tRNA(Ser) + AMP + diphosphate + H(+). The enzyme catalyses tRNA(Sec) + L-serine + ATP = L-seryl-tRNA(Sec) + AMP + diphosphate + H(+). It participates in aminoacyl-tRNA biosynthesis; selenocysteinyl-tRNA(Sec) biosynthesis; L-seryl-tRNA(Sec) from L-serine and tRNA(Sec): step 1/1. Catalyzes the attachment of serine to tRNA(Ser). Is also able to aminoacylate tRNA(Sec) with serine, to form the misacylated tRNA L-seryl-tRNA(Sec), which will be further converted into selenocysteinyl-tRNA(Sec). This is Serine--tRNA ligase, cytoplasmic (serS) from Dictyostelium discoideum (Social amoeba).